We begin with the raw amino-acid sequence, 267 residues long: MFPQDTLTIGGKVFTSRLMLGTGKFTDFHVMRDALEASGTQIVTVAIRRVELKAPGHVGLLDALDLSRYQLLPNTAGCRTAEEAVRVARLARAATGVNWVKLEVIPDPRWLLPDPIGTLKAAEILVGEGFTVLPYVQPDAVLARALERVGCATVMPLASPIGSGRGLRTGELLRTVLDGAGVPIVVDAGLGVPSDAAQALEAGADAVLVNTAVAEARDPVGMAQAFALGVQAGRAAFLAGRMAERTHASPSSPAAGVPCLPDPEVPV.

Catalysis depends on Lys101, which acts as the Schiff-base intermediate with DXP. 1-deoxy-D-xylulose 5-phosphate-binding positions include Gly162, 188 to 189 (AG), and 210 to 211 (NT). The tract at residues 247 to 267 (HASPSSPAAGVPCLPDPEVPV) is disordered.

This sequence belongs to the ThiG family. As to quaternary structure, homotetramer. Forms heterodimers with either ThiH or ThiS.

It localises to the cytoplasm. It catalyses the reaction [ThiS sulfur-carrier protein]-C-terminal-Gly-aminoethanethioate + 2-iminoacetate + 1-deoxy-D-xylulose 5-phosphate = [ThiS sulfur-carrier protein]-C-terminal Gly-Gly + 2-[(2R,5Z)-2-carboxy-4-methylthiazol-5(2H)-ylidene]ethyl phosphate + 2 H2O + H(+). Its pathway is cofactor biosynthesis; thiamine diphosphate biosynthesis. Catalyzes the rearrangement of 1-deoxy-D-xylulose 5-phosphate (DXP) to produce the thiazole phosphate moiety of thiamine. Sulfur is provided by the thiocarboxylate moiety of the carrier protein ThiS. In vitro, sulfur can be provided by H(2)S. The sequence is that of Thiazole synthase from Deinococcus geothermalis (strain DSM 11300 / CIP 105573 / AG-3a).